Reading from the N-terminus, the 570-residue chain is MSTRISRSVYADMFGPTTGDRVRLADTDLIIEVEKDLTTYGEEVKFGGGKVIRDGMGQSQVTNKDGAADTVITNALIVDHWGIVKADVAITAGVITAIGKAGNPDVQPNVDIIIGPGTDVIAGEGKILTAGGFDSHIHFICPQQIEHALMSGVTTMLGGGTGPSHGTFATTCTPGPWHIGRMIQSFDAFPVNLGISGKGNAALPGPLKEMIEGGACALKLHEDWGTTPAAIDNCLTVADAYDIQVMIHTDTLNESGFVEDTVKAFKGRTIHAFHTEGAGGGHAPDIIKVASLENVLPSSTNPTRPFTRNTIDEHLDMLMVCHHLDPSIAEDLAFAESRIRKETIAAEDILHDLGALSMMSSDSQAMGRLGEVIIRTWQTADKMKKQRGALPQDSARNDNFRVKRYIAKYTINPAIAHGVSKLIGSVETGKMADLVLWSPAFFGVKPDCIIKGGSIVAAPMGDPNASIPTPQPVHYQPMFGAYGKALTASSVVFTSQAAAAGNLARDLGIAKKLVPVSNVRGGISKKSMIHNDATPKLEVDPETYEVRADGELLTCAPAEVLPLAQRYFMF.

Residues 131–570 (GGFDSHIHFI…LPLAQRYFMF (440 aa)) enclose the Urease domain. Ni(2+) contacts are provided by His136, His138, and Lys219. Position 219 is an N6-carboxylysine (Lys219). His221 lines the substrate pocket. Residues His248 and His274 each contribute to the Ni(2+) site. The active-site Proton donor is the His322. Asp362 provides a ligand contact to Ni(2+).

Belongs to the metallo-dependent hydrolases superfamily. Urease alpha subunit family. As to quaternary structure, heterotrimer of UreA (gamma), UreB (beta) and UreC (alpha) subunits. Three heterotrimers associate to form the active enzyme. Requires Ni cation as cofactor. In terms of processing, carboxylation allows a single lysine to coordinate two nickel ions.

It localises to the cytoplasm. The catalysed reaction is urea + 2 H2O + H(+) = hydrogencarbonate + 2 NH4(+). It functions in the pathway nitrogen metabolism; urea degradation; CO(2) and NH(3) from urea (urease route): step 1/1. In Rhodopseudomonas palustris (strain ATCC BAA-98 / CGA009), this protein is Urease subunit alpha.